We begin with the raw amino-acid sequence, 978 residues long: Copper-transporting ATPase HMA4 (978 aa).

The span at 1–11 (MEQNGENHLKD) shows a compositional bias: basic and acidic residues. The interval 1–35 (MEQNGENHLKDPLLQADGGGSGASPAGASPRKERK) is disordered. HMA domains are found at residues 37–103 (RKVM…FEVD), 111–177 (AVCR…FGAD), and 186–252 (NKVH…QPPK). Positions 48, 51, 122, and 125 each coordinate Cu(+). 8 helical membrane passes run 280–300 (FLWS…LPMI), 315–335 (MTIG…IIGW), 352–372 (MDVL…YIVL), 385–405 (FFET…LEVV), 545–565 (FFVP…FVAG), 584–604 (LALQ…LGLA), 907–927 (VWAL…LFPF), and 935–955 (WLAG…SLLL).

This sequence belongs to the cation transport ATPase (P-type) (TC 3.A.3) family. Type IB subfamily. Highly expressed in roots. Expressed in vascular tissues of the stele, mainly in pericycle cells.

The protein resides in the vacuole membrane. It carries out the reaction Cu(+)(in) + ATP + H2O = Cu(+)(out) + ADP + phosphate + H(+). Copper (Cu) transporter that mediates Cu transport in root vacuoles. Involved in Cu detoxification by sequestrating Cu into root vacuoles and limiting translocation of Cu from the roots to the shoots, and accumulation in grains. This is Copper-transporting ATPase HMA4 from Oryza sativa subsp. japonica (Rice).